Here is a 286-residue protein sequence, read N- to C-terminus: 33 kDa chaperonin (286 aa).

2 disulfides stabilise this stretch: C225-C227 and C258-C261.

Belongs to the HSP33 family. In terms of processing, under oxidizing conditions two disulfide bonds are formed involving the reactive cysteines. Under reducing conditions zinc is bound to the reactive cysteines and the protein is inactive.

The protein resides in the cytoplasm. Functionally, redox regulated molecular chaperone. Protects both thermally unfolding and oxidatively damaged proteins from irreversible aggregation. Plays an important role in the bacterial defense system toward oxidative stress. This is 33 kDa chaperonin from Shewanella woodyi (strain ATCC 51908 / MS32).